We begin with the raw amino-acid sequence, 253 residues long: 5'/3'-nucleotidase SurE (253 aa).

Residues Asp8, Asp9, Ser39, and Asn92 each coordinate a divalent metal cation.

The protein belongs to the SurE nucleotidase family. A divalent metal cation serves as cofactor.

It localises to the cytoplasm. The catalysed reaction is a ribonucleoside 5'-phosphate + H2O = a ribonucleoside + phosphate. It carries out the reaction a ribonucleoside 3'-phosphate + H2O = a ribonucleoside + phosphate. It catalyses the reaction [phosphate](n) + H2O = [phosphate](n-1) + phosphate + H(+). Its function is as follows. Nucleotidase with a broad substrate specificity as it can dephosphorylate various ribo- and deoxyribonucleoside 5'-monophosphates and ribonucleoside 3'-monophosphates with highest affinity to 3'-AMP. Also hydrolyzes polyphosphate (exopolyphosphatase activity) with the preference for short-chain-length substrates (P20-25). Might be involved in the regulation of dNTP and NTP pools, and in the turnover of 3'-mononucleotides produced by numerous intracellular RNases (T1, T2, and F) during the degradation of various RNAs. This chain is 5'/3'-nucleotidase SurE, found in Escherichia coli O7:K1 (strain IAI39 / ExPEC).